The primary structure comprises 596 residues: Isocitrate dehydrogenase kinase/phosphatase (596 aa).

Residues 316-322 and Lys337 contribute to the ATP site; that span reads APGIRGM. Asp372 is a catalytic residue.

This sequence belongs to the AceK family.

It is found in the cytoplasm. It catalyses the reaction L-seryl-[isocitrate dehydrogenase] + ATP = O-phospho-L-seryl-[isocitrate dehydrogenase] + ADP + H(+). In terms of biological role, bifunctional enzyme which can phosphorylate or dephosphorylate isocitrate dehydrogenase (IDH) on a specific serine residue. This is a regulatory mechanism which enables bacteria to bypass the Krebs cycle via the glyoxylate shunt in response to the source of carbon. When bacteria are grown on glucose, IDH is fully active and unphosphorylated, but when grown on acetate or ethanol, the activity of IDH declines drastically concomitant with its phosphorylation. In Cronobacter sakazakii (strain ATCC BAA-894) (Enterobacter sakazakii), this protein is Isocitrate dehydrogenase kinase/phosphatase.